The sequence spans 72 residues: UPF0729 protein C18orf32 homolog (72 aa).

Residues 1–33 (MVCIPCIVIPVLLWIFKKFLEPYIYPVVSRIWP) form a necessary for its localzation to the endoplasmic reticulum and lipid droplets region. The segment at 36–72 (AVQQSGDKNMSKVDCKGAGTNGLPTKGPTEVSDKKKD) is disordered.

It belongs to the UPF0729 family. In terms of assembly, interacts with DERL1 and AMFR. In terms of processing, undergoes ER-associated degradation (ERAD).

It localises to the endoplasmic reticulum. The protein resides in the lipid droplet. Functionally, may activate the NF-kappa-B signaling pathway. This Mus musculus (Mouse) protein is UPF0729 protein C18orf32 homolog.